Reading from the N-terminus, the 198-residue chain is Protein UNCMA_24250 (198 aa).

The AMMECR1 domain occupies 5-194; that stretch reads EDGTLAVKTA…ETEPGGPVIE (190 aa).

The chain is Protein UNCMA_24250 from Methanocella arvoryzae (strain DSM 22066 / NBRC 105507 / MRE50).